The following is a 166-amino-acid chain: Small ribosomal subunit protein uS5 (166 aa).

Positions L11–V74 constitute an S5 DRBM domain.

The protein belongs to the universal ribosomal protein uS5 family. As to quaternary structure, part of the 30S ribosomal subunit. Contacts proteins S4 and S8.

In terms of biological role, with S4 and S12 plays an important role in translational accuracy. Its function is as follows. Located at the back of the 30S subunit body where it stabilizes the conformation of the head with respect to the body. The sequence is that of Small ribosomal subunit protein uS5 from Photorhabdus laumondii subsp. laumondii (strain DSM 15139 / CIP 105565 / TT01) (Photorhabdus luminescens subsp. laumondii).